The chain runs to 570 residues: Proline--tRNA ligase (570 aa).

It belongs to the class-II aminoacyl-tRNA synthetase family. ProS type 1 subfamily. Homodimer.

It is found in the cytoplasm. The catalysed reaction is tRNA(Pro) + L-proline + ATP = L-prolyl-tRNA(Pro) + AMP + diphosphate. Its function is as follows. Catalyzes the attachment of proline to tRNA(Pro) in a two-step reaction: proline is first activated by ATP to form Pro-AMP and then transferred to the acceptor end of tRNA(Pro). As ProRS can inadvertently accommodate and process non-cognate amino acids such as alanine and cysteine, to avoid such errors it has two additional distinct editing activities against alanine. One activity is designated as 'pretransfer' editing and involves the tRNA(Pro)-independent hydrolysis of activated Ala-AMP. The other activity is designated 'posttransfer' editing and involves deacylation of mischarged Ala-tRNA(Pro). The misacylated Cys-tRNA(Pro) is not edited by ProRS. The protein is Proline--tRNA ligase of Clostridium tetani (strain Massachusetts / E88).